A 210-amino-acid polypeptide reads, in one-letter code: Small ribosomal subunit protein uS3 (210 aa).

Residues 39 to 107 enclose the KH type-2 domain; it reads IREKLMEKLK…EILLDIQEVK (69 aa).

This sequence belongs to the universal ribosomal protein uS3 family. In terms of assembly, part of the 30S ribosomal subunit. Forms a tight complex with proteins S10 and S14.

Functionally, binds the lower part of the 30S subunit head. Binds mRNA in the 70S ribosome, positioning it for translation. The protein is Small ribosomal subunit protein uS3 of Opitutus terrae (strain DSM 11246 / JCM 15787 / PB90-1).